A 435-amino-acid chain; its full sequence is Glutamine synthetase (435 aa).

Residues 12-94 enclose the GS beta-grasp domain; sequence KGVKYFMISY…VAADCIMDDA (83 aa). The region spanning 100 to 435 is the GS catalytic domain; it reads PRVVLKKLVA…EWEHQTTLDV (336 aa). The Mg(2+) site is built by glutamate 123, glutamate 125, glutamate 180, and glutamate 187. Glycine 232 is a binding site for L-glutamate. Residue histidine 236 coordinates Mg(2+). Serine 240 is an ATP binding site. 2 residues coordinate L-glutamate: arginine 291 and arginine 315. Residues arginine 315 and arginine 320 each contribute to the ATP site. Glutamate 328 is a Mg(2+) binding site. Arginine 330 is a binding site for L-glutamate.

This sequence belongs to the glutamine synthetase family. In terms of assembly, homooctamer. The cofactor is Mg(2+).

It catalyses the reaction L-glutamate + NH4(+) + ATP = L-glutamine + ADP + phosphate + H(+). Inhibited by methionine sulfoximine, ADP and pyrophosphate, but not by various nitrogen-containing metabolites that inhibit other GS enzymes. In terms of biological role, catalyzes the ATP-dependent biosynthesis of glutamine from glutamate and ammonia. The chain is Glutamine synthetase from Rhizobium meliloti (strain 1021) (Ensifer meliloti).